The sequence spans 30 residues: Trypsin inhibitor 4 (30 aa).

3 cysteine pairs are disulfide-bonded: C3–C20, C10–C22, and C16–C28.

The protein belongs to the protease inhibitor I7 (squash-type serine protease inhibitor) family.

The protein localises to the secreted. Its function is as follows. Inhibits trypsin; probably participates in a plant defense mechanism. The polypeptide is Trypsin inhibitor 4 (Momordica charantia (Bitter gourd)).